A 142-amino-acid chain; its full sequence is Large ribosomal subunit protein uL13 (142 aa).

Belongs to the universal ribosomal protein uL13 family. Part of the 50S ribosomal subunit.

This protein is one of the early assembly proteins of the 50S ribosomal subunit, although it is not seen to bind rRNA by itself. It is important during the early stages of 50S assembly. This chain is Large ribosomal subunit protein uL13, found in Shewanella baltica (strain OS185).